A 545-amino-acid chain; its full sequence is CTP synthase (545 aa).

The segment at 1–267 is amidoligase domain; the sequence is MTKFIFVTGG…AEQVLNLLQM (267 aa). Residue S13 participates in CTP binding. S13 is a UTP binding site. Residues 14 to 19 and D71 each bind ATP; that span reads SIGKGI. D71 and E141 together coordinate Mg(2+). CTP is bound by residues 148 to 150, 188 to 193, and K224; these read DIE and KTKPTQ. UTP-binding positions include 188 to 193 and K224; that span reads KTKPTQ. The 243-residue stretch at 292 to 534 folds into the Glutamine amidotransferase type-1 domain; the sequence is EIAIVGKYVQ…IQAAIALSLS (243 aa). Position 354 (G354) interacts with L-glutamine. Residue C381 is the Nucleophile; for glutamine hydrolysis of the active site. L-glutamine-binding positions include 382–385, E405, and R462; that span reads LGMQ. Residues H507 and E509 contribute to the active site.

This sequence belongs to the CTP synthase family. As to quaternary structure, homotetramer.

It catalyses the reaction UTP + L-glutamine + ATP + H2O = CTP + L-glutamate + ADP + phosphate + 2 H(+). The enzyme catalyses L-glutamine + H2O = L-glutamate + NH4(+). It carries out the reaction UTP + NH4(+) + ATP = CTP + ADP + phosphate + 2 H(+). Its pathway is pyrimidine metabolism; CTP biosynthesis via de novo pathway; CTP from UDP: step 2/2. Its activity is regulated as follows. Allosterically activated by GTP, when glutamine is the substrate; GTP has no effect on the reaction when ammonia is the substrate. The allosteric effector GTP functions by stabilizing the protein conformation that binds the tetrahedral intermediate(s) formed during glutamine hydrolysis. Inhibited by the product CTP, via allosteric rather than competitive inhibition. Catalyzes the ATP-dependent amination of UTP to CTP with either L-glutamine or ammonia as the source of nitrogen. Regulates intracellular CTP levels through interactions with the four ribonucleotide triphosphates. This Nostoc punctiforme (strain ATCC 29133 / PCC 73102) protein is CTP synthase.